Reading from the N-terminus, the 261-residue chain is MSRKPLIAGNWKMNLNHFEAIALVQKIAFALPDKYYDKVDVTVLPPFTDLRSVQTLVDGDKLRLSYGAQDLSQHDSGAYTGDISGAFLAKLGCTFVVVGHSERRTYHNEDDALVAAKAAAALKHELTPIICIGEHLEVREAGNHVIHCEEQLRGSLAGLSAEQIGKVVIAYEPVWAIGTGRVASASDAQEVCAAIRKELASLASAQIADSVRVLYGGSVNAKNVGELIAQDDIDGGLVGGASLDGEQFATLAAIAAGGPLP.

10 to 12 (NWK) is a substrate binding site. The active-site Electrophile is the H100. E172 (proton acceptor) is an active-site residue. Substrate is bound by residues G178, S218, and 239–240 (GG).

The protein belongs to the triosephosphate isomerase family. As to quaternary structure, homodimer.

It is found in the cytoplasm. It catalyses the reaction D-glyceraldehyde 3-phosphate = dihydroxyacetone phosphate. Its pathway is carbohydrate biosynthesis; gluconeogenesis. The protein operates within carbohydrate degradation; glycolysis; D-glyceraldehyde 3-phosphate from glycerone phosphate: step 1/1. In terms of biological role, involved in the gluconeogenesis. Catalyzes stereospecifically the conversion of dihydroxyacetone phosphate (DHAP) to D-glyceraldehyde-3-phosphate (G3P). The polypeptide is Triosephosphate isomerase (Mycobacterium avium (strain 104)).